The following is a 346-amino-acid chain: Holliday junction branch migration complex subunit RuvB (346 aa).

Residues 1–188 are large ATPase domain (RuvB-L); sequence MSDEYGPPER…FGIVQRLAYY (188 aa). Residues Leu27, Arg28, Gly69, Lys72, Thr73, Thr74, 135–137, Arg178, Tyr188, and Arg225 contribute to the ATP site; that span reads EDF. Position 73 (Thr73) interacts with Mg(2+). A small ATPAse domain (RuvB-S) region spans residues 189–259; the sequence is PVDELTRIVQ…VAADAMELLD (71 aa). The tract at residues 262-346 is head domain (RuvB-H); that stretch reads RNGLDEQDRR…QAAGSGDLFG (85 aa). Arg298, Arg317, and Arg322 together coordinate DNA.

This sequence belongs to the RuvB family. Homohexamer. Forms an RuvA(8)-RuvB(12)-Holliday junction (HJ) complex. HJ DNA is sandwiched between 2 RuvA tetramers; dsDNA enters through RuvA and exits via RuvB. An RuvB hexamer assembles on each DNA strand where it exits the tetramer. Each RuvB hexamer is contacted by two RuvA subunits (via domain III) on 2 adjacent RuvB subunits; this complex drives branch migration. In the full resolvosome a probable DNA-RuvA(4)-RuvB(12)-RuvC(2) complex forms which resolves the HJ.

The protein resides in the cytoplasm. It catalyses the reaction ATP + H2O = ADP + phosphate + H(+). Its function is as follows. The RuvA-RuvB-RuvC complex processes Holliday junction (HJ) DNA during genetic recombination and DNA repair, while the RuvA-RuvB complex plays an important role in the rescue of blocked DNA replication forks via replication fork reversal (RFR). RuvA specifically binds to HJ cruciform DNA, conferring on it an open structure. The RuvB hexamer acts as an ATP-dependent pump, pulling dsDNA into and through the RuvAB complex. RuvB forms 2 homohexamers on either side of HJ DNA bound by 1 or 2 RuvA tetramers; 4 subunits per hexamer contact DNA at a time. Coordinated motions by a converter formed by DNA-disengaged RuvB subunits stimulates ATP hydrolysis and nucleotide exchange. Immobilization of the converter enables RuvB to convert the ATP-contained energy into a lever motion, pulling 2 nucleotides of DNA out of the RuvA tetramer per ATP hydrolyzed, thus driving DNA branch migration. The RuvB motors rotate together with the DNA substrate, which together with the progressing nucleotide cycle form the mechanistic basis for DNA recombination by continuous HJ branch migration. Branch migration allows RuvC to scan DNA until it finds its consensus sequence, where it cleaves and resolves cruciform DNA. This chain is Holliday junction branch migration complex subunit RuvB, found in Halorhodospira halophila (strain DSM 244 / SL1) (Ectothiorhodospira halophila (strain DSM 244 / SL1)).